The primary structure comprises 345 residues: D-alanine--D-alanine ligase (345 aa).

Residues 133–340 form the ATP-grasp domain; it reads KLYAKERGVK…IDYRYIHQIQ (208 aa). 162–211 lines the ATP pocket; sequence PLIVKPLRLGSSIGVSIAKNRQELDYALDVAFEFDEAALLEPFMQGIKEY. Residues aspartate 284, glutamate 296, and asparagine 298 each contribute to the Mg(2+) site.

It belongs to the D-alanine--D-alanine ligase family. Requires Mg(2+) as cofactor. It depends on Mn(2+) as a cofactor.

The protein resides in the cytoplasm. The catalysed reaction is 2 D-alanine + ATP = D-alanyl-D-alanine + ADP + phosphate + H(+). Its pathway is cell wall biogenesis; peptidoglycan biosynthesis. Its function is as follows. Cell wall formation. This Wolinella succinogenes (strain ATCC 29543 / DSM 1740 / CCUG 13145 / JCM 31913 / LMG 7466 / NCTC 11488 / FDC 602W) (Vibrio succinogenes) protein is D-alanine--D-alanine ligase.